The chain runs to 301 residues: Large ribosomal subunit protein uL18 (301 aa).

The segment covering 257-271 has biased composition (basic and acidic residues); that stretch reads NPERVKSTKKNDKPK. The segment at 257–283 is disordered; that stretch reads NPERVKSTKKNDKPKRDHKKFYPTKLT.

This sequence belongs to the universal ribosomal protein uL18 family. In terms of assembly, component of the large ribosomal subunit (LSU).

Its subcellular location is the cytoplasm. It localises to the nucleus. In terms of biological role, component of the ribosome, a large ribonucleoprotein complex responsible for the synthesis of proteins in the cell. The small ribosomal subunit (SSU) binds messenger RNAs (mRNAs) and translates the encoded message by selecting cognate aminoacyl-transfer RNA (tRNA) molecules. The large subunit (LSU) contains the ribosomal catalytic site termed the peptidyl transferase center (PTC), which catalyzes the formation of peptide bonds, thereby polymerizing the amino acids delivered by tRNAs into a polypeptide chain. The nascent polypeptides leave the ribosome through a tunnel in the LSU and interact with protein factors that function in enzymatic processing, targeting, and the membrane insertion of nascent chains at the exit of the ribosomal tunnel. This is Large ribosomal subunit protein uL18 (RPL5) from Tetrahymena thermophila (strain SB210).